Reading from the N-terminus, the 64-residue chain is Large ribosomal subunit protein bL35 (64 aa).

Positions 1-23 (MPKMKTHRGAAKRFKKTKNKIKR) are disordered.

Belongs to the bacterial ribosomal protein bL35 family.

The chain is Large ribosomal subunit protein bL35 from Nitratiruptor sp. (strain SB155-2).